A 990-amino-acid chain; its full sequence is Glycine dehydrogenase (decarboxylating) (990 aa).

Lysine 726 carries the post-translational modification N6-(pyridoxal phosphate)lysine.

This sequence belongs to the GcvP family. As to quaternary structure, the glycine cleavage system is composed of four proteins: P, T, L and H. It depends on pyridoxal 5'-phosphate as a cofactor.

It catalyses the reaction N(6)-[(R)-lipoyl]-L-lysyl-[glycine-cleavage complex H protein] + glycine + H(+) = N(6)-[(R)-S(8)-aminomethyldihydrolipoyl]-L-lysyl-[glycine-cleavage complex H protein] + CO2. Functionally, the glycine cleavage system catalyzes the degradation of glycine. The P protein binds the alpha-amino group of glycine through its pyridoxal phosphate cofactor; CO(2) is released and the remaining methylamine moiety is then transferred to the lipoamide cofactor of the H protein. In Rhodopseudomonas palustris (strain ATCC BAA-98 / CGA009), this protein is Glycine dehydrogenase (decarboxylating).